A 1400-amino-acid chain; its full sequence is DNA-directed RNA polymerase subunit beta' (1400 aa).

Residues Cys70, Cys72, Cys85, and Cys88 each contribute to the Zn(2+) site. Residues Asp460, Asp462, and Asp464 each coordinate Mg(2+). Zn(2+) is bound by residues Cys814, Cys887, Cys894, and Cys897.

This sequence belongs to the RNA polymerase beta' chain family. As to quaternary structure, the RNAP catalytic core consists of 2 alpha, 1 beta, 1 beta' and 1 omega subunit. When a sigma factor is associated with the core the holoenzyme is formed, which can initiate transcription. Requires Mg(2+) as cofactor. Zn(2+) serves as cofactor.

It carries out the reaction RNA(n) + a ribonucleoside 5'-triphosphate = RNA(n+1) + diphosphate. Functionally, DNA-dependent RNA polymerase catalyzes the transcription of DNA into RNA using the four ribonucleoside triphosphates as substrates. This Marinomonas sp. (strain MWYL1) protein is DNA-directed RNA polymerase subunit beta'.